The following is a 537-amino-acid chain: Oocyte zinc finger protein XlCOF29 (537 aa).

Residues 1 to 21 (MGMSEKASDTGMKGKKKDKNE) are disordered. 6 consecutive C2H2-type zinc fingers follow at residues 375–397 (FTCS…LKSH), 403–425 (FSCS…RRLH), 431–453 (FPCA…SKTH), 459–481 (YSCT…KKRH), 487–509 (YTCS…VRIH), and 515–537 (FSCS…ERMH).

Belongs to the krueppel C2H2-type zinc-finger protein family.

The protein resides in the nucleus. May be involved in transcriptional regulation. The protein is Oocyte zinc finger protein XlCOF29 of Xenopus laevis (African clawed frog).